Reading from the N-terminus, the 509-residue chain is Light-independent protochlorophyllide reductase subunit B (509 aa).

Residue aspartate 36 participates in [4Fe-4S] cluster binding. Aspartate 295 serves as the catalytic Proton donor. Glycine 430–methionine 431 contributes to the substrate binding site.

The protein belongs to the ChlB/BchB/BchZ family. In terms of assembly, protochlorophyllide reductase is composed of three subunits; ChlL, ChlN and ChlB. Forms a heterotetramer of two ChlB and two ChlN subunits. [4Fe-4S] cluster serves as cofactor.

Its subcellular location is the plastid. The protein resides in the chloroplast. It carries out the reaction chlorophyllide a + oxidized 2[4Fe-4S]-[ferredoxin] + 2 ADP + 2 phosphate = protochlorophyllide a + reduced 2[4Fe-4S]-[ferredoxin] + 2 ATP + 2 H2O. It functions in the pathway porphyrin-containing compound metabolism; chlorophyll biosynthesis (light-independent). Its function is as follows. Component of the dark-operative protochlorophyllide reductase (DPOR) that uses Mg-ATP and reduced ferredoxin to reduce ring D of protochlorophyllide (Pchlide) to form chlorophyllide a (Chlide). This reaction is light-independent. The NB-protein (ChlN-ChlB) is the catalytic component of the complex. This is Light-independent protochlorophyllide reductase subunit B from Mesostigma viride (Green alga).